The following is a 303-amino-acid chain: MDLKGLLHEENELPSIEKRKIDENAVEHDKVERKRTKSVAVPKIEMNFLNKPIVPDTTKVISNFLTHYLITEPVEHVEIEAKLGTLIDLETQNRFEFPVMNETILNPEFNLRTRFESDMTASEHKYLNEFLNQAFRDSQKPGRLPFAYKHTKQVDLFYETEDNSRDKIRVSKNQSDNQVLACVKKRRVADLFLYCPNDAFDIRISISDELPVSMPSGNQQPSLTRLKDRVGYVHQEIKIDLTKTTQNDPVYDTTERHELEVEFGNIADLRDRAQKAKDGMEAPLFRRVQLFMDNVRILRREHS.

It belongs to the fungal TPase family. Heterodimer. The mRNA-capping enzyme is composed of two separate chains alpha and beta, respectively a mRNA guanylyltransferase and an mRNA 5'-triphosphate monophosphatase. Mg(2+) is required as a cofactor.

It is found in the nucleus. It catalyses the reaction a 5'-end triphospho-ribonucleoside in mRNA + H2O = a 5'-end diphospho-ribonucleoside in mRNA + phosphate + H(+). Its function is as follows. First step of mRNA capping. Converts the 5'-triphosphate end of a nascent mRNA chain into a diphosphate end. The sequence is that of mRNA-capping enzyme subunit beta (pct1) from Schizosaccharomyces pombe (strain 972 / ATCC 24843) (Fission yeast).